The primary structure comprises 398 residues: S-adenosylmethionine synthase 2 (398 aa).

His-16 contacts ATP. Residue Asp-18 coordinates Mg(2+). Glu-51 provides a ligand contact to K(+). 2 residues coordinate L-methionine: Glu-64 and Gln-108. The tract at residues Gln-108–Ala-118 is flexible loop. ATP-binding positions include Asp-176 to Lys-178, Lys-242 to Phe-243, Asp-251, Arg-257 to Lys-258, Ala-274, and Lys-278. Residue Asp-251 participates in L-methionine binding. Lys-282 is a binding site for L-methionine.

This sequence belongs to the AdoMet synthase family. Homotetramer; dimer of dimers. The cofactor is Mg(2+). It depends on K(+) as a cofactor.

The protein resides in the cytoplasm. The enzyme catalyses L-methionine + ATP + H2O = S-adenosyl-L-methionine + phosphate + diphosphate. It functions in the pathway amino-acid biosynthesis; S-adenosyl-L-methionine biosynthesis; S-adenosyl-L-methionine from L-methionine: step 1/1. Catalyzes the formation of S-adenosylmethionine (AdoMet) from methionine and ATP. The overall synthetic reaction is composed of two sequential steps, AdoMet formation and the subsequent tripolyphosphate hydrolysis which occurs prior to release of AdoMet from the enzyme. In Rhodopseudomonas palustris (strain BisB18), this protein is S-adenosylmethionine synthase 2.